The sequence spans 294 residues: Putative HTH-type transcriptional regulatory protein STK_12680 (294 aa).

The HTH cro/C1-type domain maps to Leu-123–Leu-175. Positions Leu-134 to Arg-153 form a DNA-binding region, H-T-H motif.

The protein is Putative HTH-type transcriptional regulatory protein STK_12680 of Sulfurisphaera tokodaii (strain DSM 16993 / JCM 10545 / NBRC 100140 / 7) (Sulfolobus tokodaii).